Here is a 287-residue protein sequence, read N- to C-terminus: Polyamine aminopropyltransferase (287 aa).

The 234-residue stretch at 9-242 (GSWLDEYQND…GIWSWTFASI (234 aa)) folds into the PABS domain. S-methyl-5'-thioadenosine is bound at residue glutamine 36. 2 residues coordinate spermidine: histidine 67 and aspartate 91. S-methyl-5'-thioadenosine contacts are provided by residues glutamate 111 and 143-144 (NG). The active-site Proton acceptor is the aspartate 162. Proline 169 contacts S-methyl-5'-thioadenosine.

This sequence belongs to the spermidine/spermine synthase family. In terms of assembly, homodimer or homotetramer.

The protein resides in the cytoplasm. It catalyses the reaction S-adenosyl 3-(methylsulfanyl)propylamine + putrescine = S-methyl-5'-thioadenosine + spermidine + H(+). The protein operates within amine and polyamine biosynthesis; spermidine biosynthesis; spermidine from putrescine: step 1/1. In terms of biological role, catalyzes the irreversible transfer of a propylamine group from the amino donor S-adenosylmethioninamine (decarboxy-AdoMet) to putrescine (1,4-diaminobutane) to yield spermidine. The polypeptide is Polyamine aminopropyltransferase (Prochlorococcus marinus (strain SARG / CCMP1375 / SS120)).